We begin with the raw amino-acid sequence, 547 residues long: MAAKDVKFAGDARDRMLRGVDILANAVKVTLGPKGRNVVIEKSFGAPRITKDGVTVAKEIELEDKFENMGAQMLREVASKTNDLAGDGTTTATVLAQAIVREGAKAVAAGMNPMDLKRGIDTAVAAVIKDIEKRAKPVASSAEVAQVGTISANGDAAIGKMIAQAMQKVGNEGVITVEENKSLETEVDIVEGMKFDRGYLSPYFVTNAEKMTAELDDVYVLLHEKKLSGLQAMLPVLEAVVQSGRPLLIIAEDVEGEALATLVVNRLRGGLKVAAVKAPGFGDRRKAMLEDIAILTGGQLISDDLGMKLENVTIKMLGRAKKVVIDKENTTIVNGAGKKADIEARVGQIKAQIEETTSDYDREKLQERLAKLAGGVAVIRVGGATEIEVKEKKDRVEDALNATRAAVQEGIVPGGGVALLRAKKAVGRITNPNSDVQAGINIVLKALEAPVRQIAENAGVEGSLVVGKILEEKSETFGFDAQSEDYVDMVAKGIIDPAKVVRTALQDASSVAGLLVTTEAMVAELPKEAAPAMPAGGGMGGMGGMGF.

ATP contacts are provided by residues 30–33 (TLGP), K51, 87–91 (DGTTT), G415, and D496.

It belongs to the chaperonin (HSP60) family. Forms a cylinder of 14 subunits composed of two heptameric rings stacked back-to-back. Interacts with the co-chaperonin GroES.

The protein localises to the cytoplasm. The catalysed reaction is ATP + H2O + a folded polypeptide = ADP + phosphate + an unfolded polypeptide.. Functionally, together with its co-chaperonin GroES, plays an essential role in assisting protein folding. The GroEL-GroES system forms a nano-cage that allows encapsulation of the non-native substrate proteins and provides a physical environment optimized to promote and accelerate protein folding. The polypeptide is Chaperonin GroEL 1 (Bradyrhizobium sp. (strain BTAi1 / ATCC BAA-1182)).